Consider the following 82-residue polypeptide: Exodeoxyribonuclease 7 small subunit (82 aa).

The protein belongs to the XseB family. As to quaternary structure, heterooligomer composed of large and small subunits.

It is found in the cytoplasm. The catalysed reaction is Exonucleolytic cleavage in either 5'- to 3'- or 3'- to 5'-direction to yield nucleoside 5'-phosphates.. Its function is as follows. Bidirectionally degrades single-stranded DNA into large acid-insoluble oligonucleotides, which are then degraded further into small acid-soluble oligonucleotides. This Coxiella burnetii (strain CbuG_Q212) (Coxiella burnetii (strain Q212)) protein is Exodeoxyribonuclease 7 small subunit.